The chain runs to 855 residues: DNA mismatch repair protein MutS (855 aa).

616–623 (GPNMGGKS) serves as a coordination point for ATP.

This sequence belongs to the DNA mismatch repair MutS family.

Functionally, this protein is involved in the repair of mismatches in DNA. It is possible that it carries out the mismatch recognition step. This protein has a weak ATPase activity. This is DNA mismatch repair protein MutS from Salmonella paratyphi A (strain ATCC 9150 / SARB42).